We begin with the raw amino-acid sequence, 412 residues long: COP9 signalosome complex subunit 4 (412 aa).

A PCI domain is found at 216–378; sequence EAAQRYYELS…GILHFEDSNP (163 aa).

It belongs to the CSN4 family. Component of the CSN complex, probably composed of csn-1, csn-2, csn-3, csn-4, csn-5, csn-6 and csn-7. Within the complex it probably interacts directly with csn-2 and csn-4. In the complex, it probably interacts directly with csn-1, csn-2, csn-3 and csn-6. Interacts with itself.

Its subcellular location is the cytoplasm. It is found in the nucleus. In terms of biological role, component of the COP9 signalosome complex (CSN), a complex involved in various cellular and developmental processes. The CSN complex is an essential regulator of the ubiquitin (Ubl) conjugation pathway by mediating the deneddylation of the cullin subunits of the SCF-type E3 ligase complexes, leading to decrease the Ubl ligase activity of SCF. The CSN complex plays an essential role in embryogenesis and oogenesis and is required to regulate microtubule stability in the early embryo. Mediates mei-3/katanin targeting for degradation at the meiosis to mitosis transition via deneddylation of cul-3. This is COP9 signalosome complex subunit 4 (csn-4) from Caenorhabditis elegans.